The following is a 255-amino-acid chain: MRILLTNDDGIHAEGLAVLERIARKLSDDVWVVAPETDQSGLAHSLTLSEPLRLRQIDARHFALRGTPTDCVIMGVRHVLPGAPDLVLSGVNSGANMADDVTYSGTVAGAMEGTLLGVRAIALSQEYEYAGDRRIVPWETAEAHAPELIGRLMEAGWPEGVLLNLNFPNCAPEEVKGVRVTAQGKLSHDARLDERRDGRGFPYFWLHFGRGKAPVADDSDIAAIRSGCISVTPLHLDLTAHKVRAELGAALGVEA.

A divalent metal cation contacts are provided by Asp-8, Asp-9, Ser-40, and Asn-92.

The protein belongs to the SurE nucleotidase family. It depends on a divalent metal cation as a cofactor.

It is found in the cytoplasm. The catalysed reaction is a ribonucleoside 5'-phosphate + H2O = a ribonucleoside + phosphate. Nucleotidase that shows phosphatase activity on nucleoside 5'-monophosphates. The chain is 5'-nucleotidase SurE from Brucella canis (strain ATCC 23365 / NCTC 10854 / RM-666).